Consider the following 464-residue polypeptide: Meiotic plaque component protein 54 (464 aa).

The disordered stretch occupies residues Ser-71–Leu-102. Coiled-coil stretches lie at residues Glu-99–Cys-119, Lys-156–Leu-193, and Ser-231–Gln-365.

Interacts directly with SPO21/MPC70, NUD1, SPO74 and SPC42. Probable component of a spindle pole body (SPB) complex composed of ADY3, SSP1, DON1, MPC54, SPO21/MPC70, NUD1 and CNM67.

It is found in the prospore membrane. The protein localises to the cytoplasm. The protein resides in the cytoskeleton. Its subcellular location is the microtubule organizing center. It localises to the spindle pole body. It is found in the spindle pole. Its function is as follows. Involved in the pathway that organizes the shaping and sizing of the prospore membrane (PSM) during sporulation. This is Meiotic plaque component protein 54 (MPC54) from Saccharomyces cerevisiae (strain ATCC 204508 / S288c) (Baker's yeast).